Consider the following 130-residue polypeptide: Small ribosomal subunit protein uS11 (130 aa).

This sequence belongs to the universal ribosomal protein uS11 family. Part of the 30S ribosomal subunit. Interacts with proteins S7 and S18. Binds to IF-3.

Its function is as follows. Located on the platform of the 30S subunit, it bridges several disparate RNA helices of the 16S rRNA. Forms part of the Shine-Dalgarno cleft in the 70S ribosome. This is Small ribosomal subunit protein uS11 from Campylobacter lari (strain RM2100 / D67 / ATCC BAA-1060).